Here is a 131-residue protein sequence, read N- to C-terminus: Profilin LP04 (131 aa).

It belongs to the profilin family. As to quaternary structure, occurs in many kinds of cells as a complex with monomeric actin in a 1:1 ratio.

The protein resides in the cytoplasm. It is found in the cytoskeleton. Its function is as follows. Binds to actin and affects the structure of the cytoskeleton. At high concentrations, profilin prevents the polymerization of actin, whereas it enhances it at low concentrations. By binding to PIP2, it inhibits the formation of IP3 and DG. This Oryza sativa subsp. indica (Rice) protein is Profilin LP04.